The primary structure comprises 74 residues: MSKLGVLLTICLLLFPITALPVDGDQPADRPVERMQDNISSEQHPFFEKRAARCCTYHGSCLKEKCRRKYCCGR.

The first 19 residues, 1-19 (MSKLGVLLTICLLLFPITA), serve as a signal peptide directing secretion. The propeptide occupies 20-50 (LPVDGDQPADRPVERMQDNISSEQHPFFEKR). Intrachain disulfides connect Cys-54/Cys-66, Cys-55/Cys-71, and Cys-61/Cys-72. A Cysteine amide modification is found at Cys-72.

It belongs to the conotoxin M superfamily. As to expression, expressed by the venom duct.

Its subcellular location is the secreted. Psi-conotoxins act on postsynaptic membranes, and act as non-competitive antagonist of nicotinic acetylcholine receptors (nAChR). Reversibly inhibits both adult- and fetal-types nAChR. The inhibition potency against the adult- (alpha-1/beta-1/epsilon/delta) is higher than against the fetal-type (alpha-1/beta-1/gamma/delta). Induces flaccid paralysis in goldfish, but does not induce any remarkable behavior in mice and does not block action potential in directly stimulated frog muscle preparations. In Conus parius (Cone snail), this protein is Psi-conotoxin PrIIIE.